The chain runs to 411 residues: Acetylornithine aminotransferase (411 aa).

Residues 107–108 and phenylalanine 141 each bind pyridoxal 5'-phosphate; that span reads GT. Residue arginine 144 participates in N(2)-acetyl-L-ornithine binding. 227 to 230 is a pyridoxal 5'-phosphate binding site; that stretch reads DEIQ. Residue lysine 256 is modified to N6-(pyridoxal phosphate)lysine. Threonine 284 contacts N(2)-acetyl-L-ornithine. Threonine 285 is a pyridoxal 5'-phosphate binding site.

The protein belongs to the class-III pyridoxal-phosphate-dependent aminotransferase family. ArgD subfamily. As to quaternary structure, homodimer. It depends on pyridoxal 5'-phosphate as a cofactor.

Its subcellular location is the cytoplasm. It carries out the reaction N(2)-acetyl-L-ornithine + 2-oxoglutarate = N-acetyl-L-glutamate 5-semialdehyde + L-glutamate. Its pathway is amino-acid biosynthesis; L-arginine biosynthesis; N(2)-acetyl-L-ornithine from L-glutamate: step 4/4. In Xylella fastidiosa (strain 9a5c), this protein is Acetylornithine aminotransferase.